The following is a 158-amino-acid chain: MSVEVTVEIPKGSRNKYEIDHETGKVYLDRYLFTPMAYPLDYGFIDHTLGEDGDPMDALVILPESVFPNVIVKSRVIGVFKMTDEAGGDDKLLAVLDDPRYDHIQDISDVSDFLKDEIEHFFVHYKDLEKGKHVDGSGWGDKAEAEQILADSIERYKA.

E8 lines the Mg(2+) pocket. Substrate is bound by residues K16, R30, and Y42. Mg(2+)-binding residues include D52, D57, D84, and D89. The active-site Proton acceptor is D89. Y125 contacts substrate.

The protein belongs to the PPase family. Homohexamer. It depends on Mg(2+) as a cofactor.

It localises to the cytoplasm. It catalyses the reaction diphosphate + H2O = 2 phosphate + H(+). In terms of biological role, catalyzes the hydrolysis of inorganic pyrophosphate (PPi) forming two phosphate ions. The chain is Inorganic pyrophosphatase from Corynebacterium efficiens (strain DSM 44549 / YS-314 / AJ 12310 / JCM 11189 / NBRC 100395).